The following is a 421-amino-acid chain: FBD-associated F-box protein At5g56370 (421 aa).

The F-box domain maps to 1 to 52 (MDSISLLPDDFLLRILSLLPTKDVLNTSVLSKRWRYLWKLVPKLQYSLIDKN). An FBD domain is found at 332 to 382 (HWEEPSSVPETLMFVLETLEWRNYRGLKMENELASFLLKHSRRLKIATFSP).

This is FBD-associated F-box protein At5g56370 from Arabidopsis thaliana (Mouse-ear cress).